Consider the following 336-residue polypeptide: Quinolinate synthase (336 aa).

Iminosuccinate-binding residues include histidine 25 and serine 42. [4Fe-4S] cluster is bound at residue cysteine 86. Iminosuccinate contacts are provided by residues 117–119 and serine 138; that span reads YIN. A [4Fe-4S] cluster-binding site is contributed by cysteine 198. Iminosuccinate-binding positions include 224-226 and threonine 241; that span reads HPE. [4Fe-4S] cluster is bound at residue cysteine 288.

It belongs to the quinolinate synthase family. Type 3 subfamily. [4Fe-4S] cluster is required as a cofactor.

Its subcellular location is the cytoplasm. The enzyme catalyses iminosuccinate + dihydroxyacetone phosphate = quinolinate + phosphate + 2 H2O + H(+). Its pathway is cofactor biosynthesis; NAD(+) biosynthesis; quinolinate from iminoaspartate: step 1/1. Catalyzes the condensation of iminoaspartate with dihydroxyacetone phosphate to form quinolinate. This chain is Quinolinate synthase, found in Helicobacter pylori (strain ATCC 700392 / 26695) (Campylobacter pylori).